The following is a 474-amino-acid chain: Bifunctional protein HldE (474 aa).

The tract at residues 1-321 is ribokinase; sequence MILSSSLRPT…EYLHSSHQGE (321 aa). Residue 198 to 201 coordinates ATP; it reads NKKE. The active site involves D266. A cytidylyltransferase region spans residues 348 to 474; the sequence is FTNGCFDILH…SAVVKKIQGS (127 aa).

In the N-terminal section; belongs to the carbohydrate kinase PfkB family. It in the C-terminal section; belongs to the cytidylyltransferase family. In terms of assembly, homodimer.

It carries out the reaction D-glycero-beta-D-manno-heptose 7-phosphate + ATP = D-glycero-beta-D-manno-heptose 1,7-bisphosphate + ADP + H(+). The enzyme catalyses D-glycero-beta-D-manno-heptose 1-phosphate + ATP + H(+) = ADP-D-glycero-beta-D-manno-heptose + diphosphate. It functions in the pathway nucleotide-sugar biosynthesis; ADP-L-glycero-beta-D-manno-heptose biosynthesis; ADP-L-glycero-beta-D-manno-heptose from D-glycero-beta-D-manno-heptose 7-phosphate: step 1/4. The protein operates within nucleotide-sugar biosynthesis; ADP-L-glycero-beta-D-manno-heptose biosynthesis; ADP-L-glycero-beta-D-manno-heptose from D-glycero-beta-D-manno-heptose 7-phosphate: step 3/4. Its function is as follows. Catalyzes the phosphorylation of D-glycero-D-manno-heptose 7-phosphate at the C-1 position to selectively form D-glycero-beta-D-manno-heptose-1,7-bisphosphate. Functionally, catalyzes the ADP transfer from ATP to D-glycero-beta-D-manno-heptose 1-phosphate, yielding ADP-D-glycero-beta-D-manno-heptose. This Wolinella succinogenes (strain ATCC 29543 / DSM 1740 / CCUG 13145 / JCM 31913 / LMG 7466 / NCTC 11488 / FDC 602W) (Vibrio succinogenes) protein is Bifunctional protein HldE.